The chain runs to 204 residues: Protein GrpE (204 aa).

Positions 1 to 12 (MSNEEQAQKDDA) are enriched in basic and acidic residues. Residues 1–32 (MSNEEQAQKDDAQPVNEAAIDATAEQADAEVE) form a disordered region. Low complexity predominate over residues 17-26 (EAAIDATAEQ).

The protein belongs to the GrpE family. As to quaternary structure, homodimer.

It localises to the cytoplasm. Participates actively in the response to hyperosmotic and heat shock by preventing the aggregation of stress-denatured proteins, in association with DnaK and GrpE. It is the nucleotide exchange factor for DnaK and may function as a thermosensor. Unfolded proteins bind initially to DnaJ; upon interaction with the DnaJ-bound protein, DnaK hydrolyzes its bound ATP, resulting in the formation of a stable complex. GrpE releases ADP from DnaK; ATP binding to DnaK triggers the release of the substrate protein, thus completing the reaction cycle. Several rounds of ATP-dependent interactions between DnaJ, DnaK and GrpE are required for fully efficient folding. This chain is Protein GrpE, found in Pseudoalteromonas atlantica (strain T6c / ATCC BAA-1087).